Reading from the N-terminus, the 200-residue chain is Somatotropin (200 aa).

Positions 1-22 are cleaved as a signal peptide; it reads MARVLVVLSVVVASLFFSQGAT. His38 contributes to the Zn(2+) binding site. A disulfide bond links Cys71 and Cys173. Position 182 (Glu182) interacts with Zn(2+). The cysteines at positions 190 and 198 are disulfide-linked.

The protein belongs to the somatotropin/prolactin family.

It is found in the secreted. Functionally, growth hormone plays an important role in growth control and is involved in the regulation of several anabolic processes. Implicated as an osmoregulatory substance important for seawater adaptation. The polypeptide is Somatotropin (gh) (Heteropneustes fossilis (Stinging catfish)).